Reading from the N-terminus, the 198-residue chain is GTP cyclohydrolase-2 (198 aa).

49–53 contacts GTP; sequence RVHSE. Cys54, Cys65, and Cys67 together coordinate Zn(2+). GTP is bound by residues Gln70, 92-94, and Thr114; that span reads EGR. The active-site Proton acceptor is Asp126. Arg128 (nucleophile) is an active-site residue. GTP-binding residues include Thr149 and Lys154.

Belongs to the GTP cyclohydrolase II family. In terms of assembly, homodimer. Zn(2+) is required as a cofactor.

It carries out the reaction GTP + 4 H2O = 2,5-diamino-6-hydroxy-4-(5-phosphoribosylamino)-pyrimidine + formate + 2 phosphate + 3 H(+). It functions in the pathway cofactor biosynthesis; riboflavin biosynthesis; 5-amino-6-(D-ribitylamino)uracil from GTP: step 1/4. Functionally, catalyzes the conversion of GTP to 2,5-diamino-6-ribosylamino-4(3H)-pyrimidinone 5'-phosphate (DARP), formate and pyrophosphate. The sequence is that of GTP cyclohydrolase-2 from Escherichia fergusonii (strain ATCC 35469 / DSM 13698 / CCUG 18766 / IAM 14443 / JCM 21226 / LMG 7866 / NBRC 102419 / NCTC 12128 / CDC 0568-73).